The chain runs to 119 residues: uncharacterized protein (119 aa).

This is an uncharacterized protein from Dactylococcopsis salina (Myxobaktron salinum).